A 237-amino-acid polypeptide reads, in one-letter code: Lectin alpha chain (237 aa).

Mn(2+)-binding residues include Glu-8 and Asp-10. Residues Asp-10, Tyr-12, Asn-14, and Asp-19 each contribute to the Ca(2+) site. Residue Tyr-12 coordinates a carbohydrate. 3 residues coordinate Mn(2+): Asp-19, His-24, and Ser-34. 99 to 100 (LY) contributes to the a carbohydrate binding site. Residue Asp-208 coordinates Ca(2+). Arg-228 contributes to the a carbohydrate binding site.

It belongs to the leguminous lectin family. In terms of assembly, equilibrium between homodimer and homotetramer. Oligomerization is pH-dependent with homotetramers forming at pH 6.5 and above. In terms of processing, the beta and gamma chains are produced by partial proteolytic processing of the lectin alpha chain by an asparaginyl endopeptidase. Mixture of 60% alpha lectin and 40% of its beta and gamma proteolytic fragments. In terms of tissue distribution, seed.

The protein localises to the vacuole. It is found in the aleurone grain. Its function is as follows. D-mannose/D-glucose-binding lectin. Induces histamine release in mast cells from hamster and rat. Induces lymphocyte proliferation and IFNG production. This Macropsychanthus bicolor (Dioclea rostrata) protein is Lectin alpha chain.